The following is a 1606-amino-acid chain: Fatty acid synthase apf5 (1606 aa).

In terms of domain architecture, Carrier spans 142 to 218 (VPVSAILISL…ETLSTSHDGQ (77 aa)). Serine 177 carries the post-translational modification O-(pantetheine 4'-phosphoryl)serine. In terms of domain architecture, Ketosynthase family 3 (KS3) spans 996 to 1539 (KESLIEVALQ…QKGGQALLVH (544 aa)). Active-site for beta-ketoacyl synthase activity residues include cysteine 1182, histidine 1424, and histidine 1465.

This sequence belongs to the thiolase-like superfamily. Fungal fatty acid synthetase subunit alpha family.

The catalysed reaction is a fatty acyl-[ACP] + malonyl-[ACP] + H(+) = a 3-oxoacyl-[ACP] + holo-[ACP] + CO2. The protein operates within secondary metabolite biosynthesis. Fatty acid synthase; part of the gene cluster that mediates the biosynthesis of the cyclic tetrapeptide apicidin F (APF). The non-ribosomal peptide synthetase apf1 incorporates four different amino acids to produce apicidin F: L-phenylalanine, D-pipecolic acid (D-pip), N-methoxy-L-tryptophan and L-2-aminooctanedioic acid. L-Phenylalanine is the only proteinogenic amino acid directly used by apf1. The 3 other apf1 substrates are non-proteinogenic and have to be modified by other enzymes of the cluster. Lysine is converted to delta-1-pyrroline-5-carboxylate (P5C) which is reduced to L-pipecolic acid (L-pip) by apf3. L-pip is epimerized to D-pip, probably by apf1 activity, prior to incorporation. L-Tryptophan is N-oxidyzed by one of the cytochrome P450 monooxygenases (apf7 or apf8), and further methylated at the hydroxy group by the O-methyltransferase apf6 to yield N-methoxy-L-tryptophan. The synthesis of the fourth apf1 substrate is more complex. The fatty acid synthase apf5 is involved in the synthesis of the octanoic acid backbone of L-2-aminooctanedioic acid by fixing one acetyl-CoA unit and three malonyl-CoA units. Then one of the cytochrome P450 monooxygenases (apf7 or apf8) may oxidize this backbone to 2-oxooctanoic acid. The aminotransferase apf4 is predicted to catalyze the exchange of the keto group with an amino group. The next step would be the oxidation of 2-aminooctanoic acid by one of the cytochrome P450 monooxygenases (apf7 or apf8). The last step is the oxidation of 2-amino-8-hydroxyoctanoic acid to 2-aminooctanedioic acid is catalyzed by the FAD-dependent monooxygenase apf9. The polypeptide is Fatty acid synthase apf5 (Gibberella fujikuroi (strain CBS 195.34 / IMI 58289 / NRRL A-6831) (Bakanae and foot rot disease fungus)).